Consider the following 333-residue polypeptide: Glyceraldehyde-3-phosphate dehydrogenase 1 (333 aa).

NAD(+) contacts are provided by residues 12-13 (RI), Asp-35, and Arg-79. D-glyceraldehyde 3-phosphate contacts are provided by residues 152–154 (SCT), Thr-183, Arg-198, 211–212 (SG), and Arg-234. The Nucleophile role is filled by Cys-153. Asn-314 provides a ligand contact to NAD(+).

Belongs to the glyceraldehyde-3-phosphate dehydrogenase family. Homotetramer.

It is found in the cytoplasm. The enzyme catalyses D-glyceraldehyde 3-phosphate + phosphate + NAD(+) = (2R)-3-phospho-glyceroyl phosphate + NADH + H(+). It participates in carbohydrate degradation; glycolysis; pyruvate from D-glyceraldehyde 3-phosphate: step 1/5. With respect to regulation, resistant to pentalenolactone (PL). Its function is as follows. Catalyzes the oxidative phosphorylation of glyceraldehyde 3-phosphate (G3P) to 1,3-bisphosphoglycerate (BPG) using the cofactor NAD. The first reaction step involves the formation of a hemiacetal intermediate between G3P and a cysteine residue, and this hemiacetal intermediate is then oxidized to a thioester, with concomitant reduction of NAD to NADH. The reduced NADH is then exchanged with the second NAD, and the thioester is attacked by a nucleophilic inorganic phosphate to produce BPG. This Streptomyces arenae protein is Glyceraldehyde-3-phosphate dehydrogenase 1 (gap1).